Reading from the N-terminus, the 319-residue chain is Acetyl esterase (319 aa).

An Involved in the stabilization of the negatively charged intermediate by the formation of the oxyanion hole motif is present at residues 91-93; the sequence is HGG. Catalysis depends on residues Ser-165, Asp-262, and His-292.

The protein belongs to the 'GDXG' lipolytic enzyme family. In terms of assembly, homodimer. Interacts with MalT and MelA.

The protein localises to the cytoplasm. Functionally, displays esterase activity towards short chain fatty esters (acyl chain length of up to 8 carbons). Able to hydrolyze triacetylglycerol (triacetin) and tributyrylglycerol (tributyrin), but not trioleylglycerol (triolein) or cholesterol oleate. Negatively regulates MalT activity by antagonizing maltotriose binding. Inhibits MelA galactosidase activity. In Escherichia coli O45:K1 (strain S88 / ExPEC), this protein is Acetyl esterase.